We begin with the raw amino-acid sequence, 205 residues long: Small ribosomal subunit protein uS4 (205 aa).

The interval 18–46 (NIWGRSKSPVNRREYGPGQHGQRRKGKLS) is disordered. The region spanning 94–157 (RRLDAVVYRA…RQMTLVLEAQ (64 aa)) is the S4 RNA-binding domain.

The protein belongs to the universal ribosomal protein uS4 family. As to quaternary structure, part of the 30S ribosomal subunit. Contacts protein S5. The interaction surface between S4 and S5 is involved in control of translational fidelity.

Its function is as follows. One of the primary rRNA binding proteins, it binds directly to 16S rRNA where it nucleates assembly of the body of the 30S subunit. Functionally, with S5 and S12 plays an important role in translational accuracy. The protein is Small ribosomal subunit protein uS4 of Xanthobacter autotrophicus (strain ATCC BAA-1158 / Py2).